A 579-amino-acid chain; its full sequence is Capsid vertex component 2 (579 aa).

The interaction with major capsid protein/MCP stretch occupies residues 1 to 46 (MSRFMHFYKSPVPLVLQAHKKNCLVYTNLRTRRLRLLAQLNQREKE). A disordered region spans residues 92 to 134 (RPNEQVSSSTTTGHNNTTGTPTQSVVSGTGAVTGTGGTSSVAP). The span at 101–121 (TTTGHNNTTGTPTQSVVSGTG) shows a compositional bias: low complexity.

It belongs to the herpesviridae CVC2 protein family. In terms of assembly, heterodimerizes with CVC1. Interacts with major capsid protein/MCP and triplex capsid protein 1/TRX1 at the pentamer vertices. Interacts with the large tegument protein/LTP.

The protein localises to the virion. The protein resides in the host nucleus. Capsid vertex-specific component that plays a role during viral DNA encapsidation, assuring correct genome cleavage and presumably stabilizing capsids that contain full-length viral genomes. Participates in the interaction between the capsid and the tegument through interaction with the large tegument protein/LTP. In Elephantid herpesvirus 1 (isolate Asian elephant/Berlin/Kiba/1998) (EIHV-1), this protein is Capsid vertex component 2.